The sequence spans 1393 residues: DNA-directed RNA polymerase subunit beta'' (1393 aa).

Cys-220, Cys-291, Cys-298, and Cys-301 together coordinate Zn(2+).

Belongs to the RNA polymerase beta' chain family. RpoC2 subfamily. In plastids the minimal PEP RNA polymerase catalytic core is composed of four subunits: alpha, beta, beta', and beta''. When a (nuclear-encoded) sigma factor is associated with the core the holoenzyme is formed, which can initiate transcription. It depends on Zn(2+) as a cofactor.

Its subcellular location is the plastid. It localises to the chloroplast. The enzyme catalyses RNA(n) + a ribonucleoside 5'-triphosphate = RNA(n+1) + diphosphate. DNA-dependent RNA polymerase catalyzes the transcription of DNA into RNA using the four ribonucleoside triphosphates as substrates. The protein is DNA-directed RNA polymerase subunit beta'' of Gossypium hirsutum (Upland cotton).